The chain runs to 322 residues: Dioxygenase himG (322 aa).

Fe cation contacts are provided by His148 and His229.

Belongs to the PhyH family. Homodimer. Requires Fe cation as cofactor.

It functions in the pathway secondary metabolite biosynthesis. Functionally, polyketide synthase-nonribosomal peptide synthetase; part of the him gene cluster that mediates the biosynthesis of himeic acid A, a ubiquitin-activating enzyme (E1) inhibitor. First, himA, together with the trans-enoyl reductase himH, catalyzes the formation of apolyketide chain, which is then condensed with leucine by the NRPS activity of himA. Dieckmann cyclization and release from himA gives a tetramic acid intermediate as the product of himA PKS-NRPS. HimG then catalyzes alpha-oxidation of the tetramic acid ring, with a subsequent rearrangement to yield apyrone intermediate. Two terminal methyl groups of polyketide and amide side chains are oxidized to carboxylic acids by himC cytochrome P450 monooxygenase to form himeic acid A. Himeic acid A is further converted to himeic acid B and C during culture growth. No gene responsible for pyrone to pyridone conversion was found in the him gene cluster and himeic acid A is non-enzymatically converted to himeic acid C by the incorporation of an ammonium nitrogen atom in a pH5 buffer, and to himeic acid B at a conversion ratio of 50% during incubation in MeOH for 5 days. This chain is Dioxygenase himG, found in Aspergillus japonicus.